A 98-amino-acid polypeptide reads, in one-letter code: Integration host factor subunit alpha (98 aa).

The disordered stretch occupies residues 49–70; that stretch reads FGNFDLRDKNQRPGRNPKTGED.

This sequence belongs to the bacterial histone-like protein family. Heterodimer of an alpha and a beta chain.

Functionally, this protein is one of the two subunits of integration host factor, a specific DNA-binding protein that functions in genetic recombination as well as in transcriptional and translational control. This chain is Integration host factor subunit alpha, found in Sodalis glossinidius (strain morsitans).